A 3841-amino-acid chain; its full sequence is Transformation/transcription domain-associated protein (3841 aa).

2 disordered regions span residues 491–516 and 2002–2027; these read TPTV…PPAT and QQPE…MKRG. Over residues 498–515 the composition is skewed to pro residues; the sequence is ALPPPAPPTPVTPAPPPA. The Bipartite nuclear localization signal signature appears at 2025–2040; the sequence is KRGMSVDSAQDVKRFR. An FAT domain is found at 2671 to 3239; sequence VLKYLGKTHN…YFPIRTLYLT (569 aa). The segment at 3249–3271 is disordered; that stretch reads KSDSGQQQPSSAAAQTHSASDPG. Low complexity predominate over residues 3251-3268; the sequence is DSGQQQPSSAAAQTHSAS. Residues 3482–3805 form the PI3K/PI4K catalytic domain; sequence MPRVEIVQKH…AVTAIMTRLH (324 aa). Residues 3488-3494 form a G-loop region; sequence VQKHNTA. A catalytic loop region spans residues 3669–3677; it reads HLNRLNPEM. Residues 3689-3714 form an activation loop region; it reads VSYFRFDINDATGDLDANRPVPFRLT. Positions 3809–3841 constitute an FATC domain; it reads QFEGGESKVNTLVAAANSLDNLCRMDPAWHPWL.

Belongs to the PI3/PI4-kinase family. TRA1 subfamily.

The protein localises to the nucleus. Its function is as follows. Adapter protein, which is found in various multiprotein chromatin complexes with histone acetyltransferase activity (HAT), which gives a specific tag for epigenetic transcription activation. May be required for the mitotic checkpoint and normal cell cycle progression. May play a role in the formation and maintenance of the auditory system. The protein is Transformation/transcription domain-associated protein of Danio rerio (Zebrafish).